The sequence spans 381 residues: Chaperone protein DnaJ (381 aa).

Positions 5 to 70 constitute a J domain; sequence DYYEVLGVSR…DKKAAYDRYG (66 aa). The CR-type zinc-finger motif lies at 140-218; it reads GVQKTINVPA…CHGAGRVEKE (79 aa). Cys-153, Cys-156, Cys-170, Cys-173, Cys-192, Cys-195, Cys-206, and Cys-209 together coordinate Zn(2+). 4 CXXCXGXG motif repeats span residues 153 to 160, 170 to 177, 192 to 199, and 206 to 213; these read CDACKGTG, CPTCSGMG, CPTCNGMG, and CKVCHGAG.

Belongs to the DnaJ family. In terms of assembly, homodimer. Zn(2+) serves as cofactor.

It is found in the cytoplasm. Functionally, participates actively in the response to hyperosmotic and heat shock by preventing the aggregation of stress-denatured proteins and by disaggregating proteins, also in an autonomous, DnaK-independent fashion. Unfolded proteins bind initially to DnaJ; upon interaction with the DnaJ-bound protein, DnaK hydrolyzes its bound ATP, resulting in the formation of a stable complex. GrpE releases ADP from DnaK; ATP binding to DnaK triggers the release of the substrate protein, thus completing the reaction cycle. Several rounds of ATP-dependent interactions between DnaJ, DnaK and GrpE are required for fully efficient folding. Also involved, together with DnaK and GrpE, in the DNA replication of plasmids through activation of initiation proteins. The sequence is that of Chaperone protein DnaJ from Cereibacter sphaeroides (strain KD131 / KCTC 12085) (Rhodobacter sphaeroides).